A 155-amino-acid chain; its full sequence is 3-hydroxyacyl-[acyl-carrier-protein] dehydratase FabZ (155 aa).

His58 is a catalytic residue.

The protein belongs to the thioester dehydratase family. FabZ subfamily.

The protein localises to the cytoplasm. The enzyme catalyses a (3R)-hydroxyacyl-[ACP] = a (2E)-enoyl-[ACP] + H2O. Its function is as follows. Involved in unsaturated fatty acids biosynthesis. Catalyzes the dehydration of short chain beta-hydroxyacyl-ACPs and long chain saturated and unsaturated beta-hydroxyacyl-ACPs. In Rhizobium etli (strain ATCC 51251 / DSM 11541 / JCM 21823 / NBRC 15573 / CFN 42), this protein is 3-hydroxyacyl-[acyl-carrier-protein] dehydratase FabZ.